We begin with the raw amino-acid sequence, 275 residues long: Small ribosomal subunit protein uS3 (275 aa).

In terms of domain architecture, KH type-2 spans 38–106; that stretch reads IRKLLATGLE…QVQLNILEVK (69 aa). The tract at residues 215–275 is disordered; the sequence is AAAAPASDRP…AEAPAESTES (61 aa). Residues 237 to 275 show a composition bias toward low complexity; it reads SGSAGTTATSTEAGRAATSDAPAAGTAAAAEAPAESTES.

This sequence belongs to the universal ribosomal protein uS3 family. As to quaternary structure, part of the 30S ribosomal subunit. Forms a tight complex with proteins S10 and S14.

In terms of biological role, binds the lower part of the 30S subunit head. Binds mRNA in the 70S ribosome, positioning it for translation. This chain is Small ribosomal subunit protein uS3, found in Mycolicibacterium smegmatis (strain ATCC 700084 / mc(2)155) (Mycobacterium smegmatis).